The primary structure comprises 449 residues: Adenylosuccinate synthetase isozyme 1 A (449 aa).

Residues 1–10 (MSHKSCYTNP) show a composition bias toward polar residues. Positions 1–22 (MSHKSCYTNPGTGGKRPRNDKG) are disordered. GTP-binding positions include 34-40 (GDEGKGK) and 62-64 (GHT). Asp35 functions as the Proton acceptor in the catalytic mechanism. Mg(2+) contacts are provided by Asp35 and Gly62. Substrate is bound at residue Asp35. Residues 35 to 38 (DEGK), 60 to 63 (NAGH), Thr155, Arg169, Asn248, Thr263, and Arg327 contribute to the IMP site. The active-site Proton donor is the His63. 323 to 329 (VTTGRKR) serves as a coordination point for substrate. GTP-binding positions include Arg329, 355-357 (KLD), and 437-440 (GVGK).

This sequence belongs to the adenylosuccinate synthetase family. Homodimer. It depends on Mg(2+) as a cofactor.

The protein resides in the cytoplasm. It carries out the reaction IMP + L-aspartate + GTP = N(6)-(1,2-dicarboxyethyl)-AMP + GDP + phosphate + 2 H(+). The protein operates within purine metabolism; AMP biosynthesis via de novo pathway; AMP from IMP: step 1/2. Functionally, component of the purine nucleotide cycle (PNC), which interconverts IMP and AMP to regulate the nucleotide levels in various tissues, and which contributes to glycolysis and ammoniagenesis. Catalyzes the first committed step in the biosynthesis of AMP from IMP. The protein is Adenylosuccinate synthetase isozyme 1 A (adss1a) of Salmo salar (Atlantic salmon).